Reading from the N-terminus, the 464-residue chain is Kynureninase (464 aa).

Position 1 is an N-acetylmethionine (methionine 1). Residues leucine 137, threonine 138, 165 to 168 (FPSD), serine 221, aspartate 250, histidine 253, and tyrosine 275 contribute to the pyridoxal 5'-phosphate site. The residue at position 276 (lysine 276) is an N6-(pyridoxal phosphate)lysine. Residues tryptophan 305 and asparagine 333 each contribute to the pyridoxal 5'-phosphate site.

Belongs to the kynureninase family. In terms of assembly, homodimer. Pyridoxal 5'-phosphate is required as a cofactor. High levels in liver and kidney. Also detected in heart, retina, ovary. Lung, testis and brain.

The protein localises to the cytoplasm. Its subcellular location is the cytosol. It catalyses the reaction L-kynurenine + H2O = anthranilate + L-alanine + H(+). The catalysed reaction is 3-hydroxy-L-kynurenine + H2O = 3-hydroxyanthranilate + L-alanine + H(+). Its pathway is amino-acid degradation; L-kynurenine degradation; L-alanine and anthranilate from L-kynurenine: step 1/1. It participates in cofactor biosynthesis; NAD(+) biosynthesis; quinolinate from L-kynurenine: step 2/3. With respect to regulation, inhibited by o-methylbenzoylalanine (OMBA). Catalyzes the cleavage of L-kynurenine (L-Kyn) and L-3-hydroxykynurenine (L-3OHKyn) into anthranilic acid (AA) and 3-hydroxyanthranilic acid (3-OHAA), respectively. Has a preference for the L-3-hydroxy form. Also has cysteine-conjugate-beta-lyase activity. This is Kynureninase (Kynu) from Rattus norvegicus (Rat).